A 641-amino-acid chain; its full sequence is 1-deoxy-D-xylulose-5-phosphate synthase (641 aa).

Thiamine diphosphate is bound by residues H80 and 121–123 (GHS). D152 provides a ligand contact to Mg(2+). Residues 153-154 (GS), N181, Y290, and E372 each bind thiamine diphosphate. Residue N181 participates in Mg(2+) binding.

Belongs to the transketolase family. DXPS subfamily. In terms of assembly, homodimer. Mg(2+) serves as cofactor. Requires thiamine diphosphate as cofactor.

It catalyses the reaction D-glyceraldehyde 3-phosphate + pyruvate + H(+) = 1-deoxy-D-xylulose 5-phosphate + CO2. The protein operates within metabolic intermediate biosynthesis; 1-deoxy-D-xylulose 5-phosphate biosynthesis; 1-deoxy-D-xylulose 5-phosphate from D-glyceraldehyde 3-phosphate and pyruvate: step 1/1. Functionally, catalyzes the acyloin condensation reaction between C atoms 2 and 3 of pyruvate and glyceraldehyde 3-phosphate to yield 1-deoxy-D-xylulose-5-phosphate (DXP). This Rhodobacter capsulatus (Rhodopseudomonas capsulata) protein is 1-deoxy-D-xylulose-5-phosphate synthase.